A 124-amino-acid chain; its full sequence is Large ribosomal subunit protein uL22 (124 aa).

This sequence belongs to the universal ribosomal protein uL22 family. In terms of assembly, part of the 50S ribosomal subunit.

This protein binds specifically to 23S rRNA; its binding is stimulated by other ribosomal proteins, e.g. L4, L17, and L20. It is important during the early stages of 50S assembly. It makes multiple contacts with different domains of the 23S rRNA in the assembled 50S subunit and ribosome. Its function is as follows. The globular domain of the protein is located near the polypeptide exit tunnel on the outside of the subunit, while an extended beta-hairpin is found that lines the wall of the exit tunnel in the center of the 70S ribosome. This is Large ribosomal subunit protein uL22 from Synechococcus sp. (strain JA-2-3B'a(2-13)) (Cyanobacteria bacterium Yellowstone B-Prime).